We begin with the raw amino-acid sequence, 4069 residues long: Cardiomyopathy-associated protein 5 (4069 aa).

Disordered regions lie at residues 1-177 (MASR…SQVL), 341-387 (TVPS…DTPA), 442-525 (GLAA…EDSN), 538-558 (ESPL…VEHK), 597-705 (EYSV…VPSL), 732-793 (PSEE…RFTP), 844-872 (SSPD…APPL), 890-948 (LERY…FSPD), 979-1009 (TSPS…VSIP), 1041-1097 (ADEE…PEIP), 1160-1179 (VKEE…SVPA), 1205-1237 (RKEE…PESE), 1540-1575 (KETE…ELEN), 1594-1742 (PAVE…EEFQ), 1757-1809 (HPAD…ITEP), 1892-1988 (ENWM…VKLA), 2064-2175 (TISS…KKGI), 2187-2259 (FGSS…SGDG), 2385-2412 (PQQP…SIIL), 2425-2463 (SEDR…LENR), 2494-2527 (TQIT…NERP), 2653-2706 (QEGN…VGTQ), and 2750-2862 (SSRD…SDVP). Positions 27–47 (ETEEESEGEEDETAAESEEEP) are enriched in acidic residues. Over residues 48–62 (DSRLSDQDEEGKIKQ) the composition is skewed to basic and acidic residues. Residues 84–119 (TWETNSSRSSTPWASEESQTSGVCSREGSTVNSPPG) show a composition bias toward polar residues. The span at 130–153 (KVRKRTHKSKHGSPSLRRKGNRKR) shows a compositional bias: basic residues. At serine 155 the chain carries Phosphoserine. Polar residues-rich tracts occupy residues 156–177 (FESQ…SQVL) and 341–350 (TVPSYSSSGR). Over residues 489–499 (LEPSISLSEPL) the composition is skewed to low complexity. The segment covering 500-510 (MLEEPEKEEIE) has biased composition (acidic residues). Serine 631 is subject to Phosphoserine. Over residues 640 to 659 (AYSPAAAPTSESSLSPSTTE) the composition is skewed to low complexity. Composition is skewed to polar residues over residues 664 to 673 (NQSPLFSTVT), 692 to 701 (PDSTSASEYS), and 752 to 775 (PSLS…TATS). The span at 1049–1063 (TAATPVSEQFSSSQK) shows a compositional bias: polar residues. Over residues 1085–1094 (DKSEKAEIKP) the composition is skewed to basic and acidic residues. Residues 1214–1223 (QEATAHVSQD) show a composition bias toward polar residues. Basic and acidic residues predominate over residues 1621 to 1630 (EPEKKDKPHQ). Residues 1639–1662 (SEFSSDLGRQSGSIGTKQAKSPIT) are compositionally biased toward polar residues. Composition is skewed to basic and acidic residues over residues 1668–1687 (VLEK…ENRE), 1704–1714 (LREESQNEEIK), and 1786–1795 (ILDKLSEETG). Residues 1796–1808 (HPNSSQVLQSITE) show a composition bias toward polar residues. The segment covering 1935–1955 (SKDHTCEVRKQVLPHSAEESH) has biased composition (basic and acidic residues). Over residues 1956–1980 (LSSQEAVSALDTSSGNTETLSSKSY) the composition is skewed to polar residues. The span at 2085–2124 (NEKEAHRSTPPFPEEKPLEESKMVQSKVIDDADEGKKPSP) shows a compositional bias: basic and acidic residues. A compositionally biased stretch (polar residues) spans 2145 to 2155 (SPESPEVTQNP). Composition is skewed to basic and acidic residues over residues 2162 to 2172 (AKPDLPEEKGK) and 2232 to 2250 (KPAD…DEPR). A compositionally biased stretch (polar residues) spans 2387–2399 (QPKSASSNFASKN). The residue at position 2404 (serine 2404) is a Phosphoserine. Over residues 2441 to 2461 (ISEEETKLRSVSPTEKKDNLE) the composition is skewed to basic and acidic residues. Composition is skewed to basic and acidic residues over residues 2661-2681 (KSSR…ESEL), 2750-2769 (SSRD…ESEL), and 2777-2804 (ITKE…ETKS). Position 2813 is a phosphoserine (serine 2813). Positions 2830–2847 (AVKKKEMPRSELTPERHT) are enriched in basic and acidic residues. A coiled-coil region spans residues 2964–2988 (SIDQEESEQMQDKLEYLEEKASFKT). Over residues 3015-3031 (PLKENKQKETHKTKEEI) the composition is skewed to basic and acidic residues. Disordered stretches follow at residues 3015-3037 (PLKE…DSET), 3119-3156 (EKGH…PGMP), 3204-3231 (KKKE…SDTD), 3386-3421 (SGAT…QDEY), and 3465-3495 (EFAS…SSEV). Residues 3052 to 3365 (YFEKYTLIDY…GSHGNEVGNA (314 aa)) form a required for RYR2 clustering region. The span at 3128-3138 (PETQSQNSADR) shows a compositional bias: polar residues. Basic and acidic residues predominate over residues 3139 to 3150 (NVSKDTKRDVDS). Positions 3213–3227 (EGDSVNSEASFPSRN) are enriched in polar residues. Serine 3228 bears the Phosphoserine mark. Over residues 3477–3489 (EQKELGSERKEED) the composition is skewed to basic and acidic residues. The amphipathic helix H1 stretch occupies residues 3517–3544 (KCPISATDKVFGTHKDHEVSTLDTAISA). Residues 3544 to 3653 (AVKVQLAEFL…REAEELDEAV (110 aa)) adopt a coiled-coil conformation. A B-box coiled-coil; BBC region spans residues 3545–3672 (VKVQLAEFLE…ERLLSAMEST (128 aa)). Positions 3631-3648 (SMDTAKDTLETIVREAEE) are amphipathic helix H2. 2 Fibronectin type-III domains span residues 3704–3805 (VPQP…TAPS) and 3806–3898 (TPVI…TRGT). The tract at residues 3751–3767 (EVNELVEEYRLTVKESY) is amphipathic helix H3. The B30.2/SPRY domain maps to 3880–4065 (NAFGTSEQSE…LHLGIEPPDS (186 aa)).

Interacts with PRKAR2A. Interacts with ACTN2 and DTNBP1/dysbindin. Interacts with DES. Interacts with DMD/dystrophin. Interacts with the calcineurin catalytic subunit PPP3CA. Interacts with TTN. Interacts with CAPN3; this interaction, which results in CMYA5 proteolysis, may protect CAPN3 from autolysis. Interacts with FSD2. Identified in a complex composed of FSD2, CMYA5 and RYR2. Phosphorylated by PKA. As to expression, expressed in skeletal muscle; at a strong level and in heart.

Its subcellular location is the nucleus. It is found in the sarcoplasmic reticulum. The protein localises to the cytoplasm. It localises to the perinuclear region. The protein resides in the myofibril. Its subcellular location is the sarcomere. It is found in the m line. Its function is as follows. May serve as an anchoring protein that mediates the subcellular compartmentation of protein kinase A (PKA) via binding to PRKAR2A. May function as a repressor of calcineurin-mediated transcriptional activity. May attenuate calcineurin ability to induce slow-fiber gene program in muscle and may negatively modulate skeletal muscle regeneration. Plays a role in the assembly of ryanodine receptor (RYR2) clusters in striated muscle. This Homo sapiens (Human) protein is Cardiomyopathy-associated protein 5 (CMYA5).